The following is a 340-amino-acid chain: Uroporphyrinogen decarboxylase (340 aa).

Substrate is bound by residues 21 to 25 (RQAGR), Asp-71, Tyr-148, Ser-203, and His-316.

Belongs to the uroporphyrinogen decarboxylase family. As to quaternary structure, homodimer.

Its subcellular location is the cytoplasm. It catalyses the reaction uroporphyrinogen III + 4 H(+) = coproporphyrinogen III + 4 CO2. It functions in the pathway porphyrin-containing compound metabolism; protoporphyrin-IX biosynthesis; coproporphyrinogen-III from 5-aminolevulinate: step 4/4. Functionally, catalyzes the decarboxylation of four acetate groups of uroporphyrinogen-III to yield coproporphyrinogen-III. This is Uroporphyrinogen decarboxylase from Campylobacter jejuni subsp. jejuni serotype O:6 (strain 81116 / NCTC 11828).